A 564-amino-acid polypeptide reads, in one-letter code: Sphingomyelin phosphodiesterase 1 (564 aa).

The signal sequence occupies residues 1-17 (MRIIYLISTVLLIYTNA). One can recognise a Saposin B-type domain in the interval 37-121 (FQPLCISCTG…IILPDCADPT (85 aa)). Intrachain disulfides connect Cys-41–Cys-117, Cys-44–Cys-110, and Cys-72–Cys-83. N-linked (GlcNAc...) asparagine glycosylation occurs at Asn-151. Asp-165 and His-167 together coordinate Zn(2+). 2 cysteine pairs are disulfide-bonded: Cys-180–Cys-185 and Cys-186–Cys-206. Residue Asn-221 is glycosylated (N-linked (GlcNAc...) asparagine). Zn(2+)-binding residues include Asp-234 and Asn-274. A disulfide bond links Cys-341 and Cys-389. N-linked (GlcNAc...) asparagine glycosylation is present at Asn-351. Residues His-381, His-415, and His-417 each contribute to the Zn(2+) site. Asn-430 carries N-linked (GlcNAc...) asparagine glycosylation. 2 disulfide bridges follow: Cys-538-Cys-542 and Cys-548-Cys-561. Asn-556 carries N-linked (GlcNAc...) asparagine glycosylation.

The protein belongs to the acid sphingomyelinase family. Zn(2+) serves as cofactor.

It is found in the secreted. It catalyses the reaction a sphingomyelin + H2O = phosphocholine + an N-acylsphing-4-enine + H(+). It carries out the reaction an N-acyl-15-methylhexadecasphing-4-enine-1-phosphocholine + H2O = an N-acyl-15-methylhexadecasphing-4-enine + phosphocholine + H(+). Its pathway is lipid metabolism; sphingolipid metabolism. In terms of biological role, sphingomyelin phosphodiesterase (sphingomyelinase) that converts sphingomyelin to ceramide (N-acyl-sphingoid base) and phosphocholine at acidic pH. Displays its enzymatic activity when secreted. May play distinct roles in signaling. This chain is Sphingomyelin phosphodiesterase 1 (asm-1), found in Caenorhabditis elegans.